The following is a 234-amino-acid chain: Ribosomal RNA small subunit methyltransferase G (234 aa).

S-adenosyl-L-methionine is bound by residues glycine 74, phenylalanine 79, 125 to 126, and arginine 144; that span reads AE.

It belongs to the methyltransferase superfamily. RNA methyltransferase RsmG family.

The protein localises to the cytoplasm. Its function is as follows. Specifically methylates the N7 position of a guanine in 16S rRNA. This is Ribosomal RNA small subunit methyltransferase G from Roseiflexus castenholzii (strain DSM 13941 / HLO8).